The sequence spans 109 residues: Flagellar hook-basal body complex protein FliE (109 aa).

This sequence belongs to the FliE family.

The protein resides in the bacterial flagellum basal body. This chain is Flagellar hook-basal body complex protein FliE, found in Pseudomonas savastanoi pv. phaseolicola (strain 1448A / Race 6) (Pseudomonas syringae pv. phaseolicola (strain 1448A / Race 6)).